The chain runs to 119 residues: Holo-[acyl-carrier-protein] synthase (119 aa).

2 residues coordinate Mg(2+): Asp8 and Glu59.

This sequence belongs to the P-Pant transferase superfamily. AcpS family. Mg(2+) serves as cofactor.

The protein resides in the cytoplasm. It catalyses the reaction apo-[ACP] + CoA = holo-[ACP] + adenosine 3',5'-bisphosphate + H(+). Transfers the 4'-phosphopantetheine moiety from coenzyme A to a Ser of acyl-carrier-protein. In Staphylococcus aureus (strain JH1), this protein is Holo-[acyl-carrier-protein] synthase.